The sequence spans 424 residues: Tryptophan synthase beta chain (424 aa).

N6-(pyridoxal phosphate)lysine is present on Lys-108.

This sequence belongs to the TrpB family. Tetramer of two alpha and two beta chains. It depends on pyridoxal 5'-phosphate as a cofactor.

It carries out the reaction (1S,2R)-1-C-(indol-3-yl)glycerol 3-phosphate + L-serine = D-glyceraldehyde 3-phosphate + L-tryptophan + H2O. It functions in the pathway amino-acid biosynthesis; L-tryptophan biosynthesis; L-tryptophan from chorismate: step 5/5. In terms of biological role, the beta subunit is responsible for the synthesis of L-tryptophan from indole and L-serine. This Thermoplasma acidophilum (strain ATCC 25905 / DSM 1728 / JCM 9062 / NBRC 15155 / AMRC-C165) protein is Tryptophan synthase beta chain (trpB).